The chain runs to 259 residues: Glutathione S-transferase domain-containing protein DDB_G0274705 (259 aa).

A GST N-terminal domain is found at 7 to 96 (KIDYIFYTNN…YLAQKFNTFL (90 aa)). The 131-residue stretch at 102–232 (NPLENSEVIT…GFKNFNPSLL (131 aa)) folds into the GST C-terminal domain.

This sequence belongs to the GST superfamily.

The protein is Glutathione S-transferase domain-containing protein DDB_G0274705 of Dictyostelium discoideum (Social amoeba).